The primary structure comprises 164 residues: Coenzyme Q-binding protein coq10, mitochondrial (164 aa).

The protein belongs to the COQ10 family. In terms of assembly, interacts with coenzyme Q.

Its subcellular location is the mitochondrion inner membrane. Required for the function of coenzyme Q in the respiratory chain. May serve as a chaperone or may be involved in the transport of Q6 from its site of synthesis to the catalytic sites of the respiratory complexes. The chain is Coenzyme Q-binding protein coq10, mitochondrial from Schizosaccharomyces pombe (strain 972 / ATCC 24843) (Fission yeast).